Here is a 184-residue protein sequence, read N- to C-terminus: Trichothecene 15-O-acetyltransferase SAT16 (184 aa).

Histidine 154 is a substrate binding site.

This sequence belongs to the trichothecene O-acetyltransferase family.

The protein operates within mycotoxin biosynthesis. Its function is as follows. Trichothecene 15-O-acetyltransferase; part of the satratoxin SC2 cluster involved in the biosynthesis of satratoxins, trichothecene mycotoxins that are associated with human food poisonings. Satratoxins are suggested to be made by products of multiple gene clusters (SC1, SC2 and SC3) that encode 21 proteins in all, including polyketide synthases, acetyltransferases, and other enzymes expected to modify the trichothecene skeleton. SC1 encodes 10 proteins, SAT1 to SAT10. The largest are SAT8, which encodes a putative polyketide synthase (PKS) with a conventional non-reducing architecture, and SAT10, a putative protein containing four ankyrin repeats and thus may be involved in protein scaffolding. The putative short-chain reductase SAT3 may assist the PKS in some capacity. SAT6 contains a secretory lipase domain and acts probably as a trichothecene esterase. SAT5 encodes a putative acetyltransferase, and so, with SAT6, may affect endogenous protection from toxicity. The probable transcription factor SAT9 may regulate the expression of the SC1 cluster. SC2 encodes proteins SAT11 to SAT16, the largest of which encodes the putative reducing PKS SAT13. SAT11 is a cytochrome P450 monooxygenase, while SAT14 and SAT16 are probable acetyltransferases. The SC2 cluster may be regulated by the transcription factor SAT15. SC3 is a small cluster that encodes 5 proteins, SAT17 to SAT21. SAT21 is a putative MFS-type transporter which may have a role in exporting secondary metabolites. The four other proteins putatively encoded in SC3 include the taurine hydroxylase-like protein SAT17, the O-methyltransferase SAT18, the acetyltransferase SAT19, and the Cys6-type zinc finger SAT20, the latter being probably involved in regulation of SC3 expression. The sequence is that of Trichothecene 15-O-acetyltransferase SAT16 from Stachybotrys chartarum (strain CBS 109288 / IBT 7711) (Toxic black mold).